The sequence spans 264 residues: MRLIDSTAKISPLAVVEEGAQIGAHVEIGPFSVIGKNVKIGAKTIIHSHVVINGHTEIGEQNQIFQFASIGEINQDLKYQGEPTKVIIGNRNRIRESVTIHRGTVQGGGVTRIGNDNLFMINTHIAHDCSIGNRCIIANNGTLAGHVTLDDFVIVGGMSAIHQFVVIGSHVMLGGGSMVSQDVPPYVMAQGNHAQPFGVNLEGLKRRGFDKPAMHAIRNAYKLIYRSGKTIEEAIPEIEQFAVNEPAVQLFLDFFKRSTRGIIR.

This sequence belongs to the transferase hexapeptide repeat family. LpxA subfamily. As to quaternary structure, homotrimer.

Its subcellular location is the cytoplasm. It carries out the reaction a (3R)-hydroxyacyl-[ACP] + UDP-N-acetyl-alpha-D-glucosamine = a UDP-3-O-[(3R)-3-hydroxyacyl]-N-acetyl-alpha-D-glucosamine + holo-[ACP]. It participates in glycolipid biosynthesis; lipid IV(A) biosynthesis; lipid IV(A) from (3R)-3-hydroxytetradecanoyl-[acyl-carrier-protein] and UDP-N-acetyl-alpha-D-glucosamine: step 1/6. Its function is as follows. Involved in the biosynthesis of lipid A, a phosphorylated glycolipid that anchors the lipopolysaccharide to the outer membrane of the cell. In Actinobacillus pleuropneumoniae serotype 7 (strain AP76), this protein is Acyl-[acyl-carrier-protein]--UDP-N-acetylglucosamine O-acyltransferase.